The sequence spans 314 residues: Coiled-coil domain-containing protein 42 like-2 (314 aa).

Coiled coils occupy residues 34 to 139 (RLLE…RQEK) and 175 to 233 (NKLL…WESR).

The protein belongs to the CFAP73 family.

The protein is Coiled-coil domain-containing protein 42 like-2 of Xenopus laevis (African clawed frog).